We begin with the raw amino-acid sequence, 496 residues long: Genome polyprotein (496 aa).

At Ser1–Ser447 the chain is on the extracellular side. Intrachain disulfides connect Cys3-Cys30, Cys60-Cys116, Cys60-Cys121, Cys74-Cys105, Cys92-Cys116, and Cys92-Cys121. The tract at residues Asp98–Gly111 is fusion peptide. Residue Asn154 is glycosylated (N-linked (GlcNAc...) asparagine; by host). Cystine bridges form between Cys186–Cys290 and Cys307–Cys338. The chain crosses the membrane as a helical span at residues Ile448 to Gly468. The Cytoplasmic segment spans residues Leu469 to Ser479. The chain crosses the membrane as a helical span at residues Phe480–Ala496.

As to quaternary structure, homodimer; in the endoplasmic reticulum and Golgi. In terms of processing, N-glycosylated.

The protein localises to the virion membrane. The protein resides in the host endoplasmic reticulum membrane. Functionally, binds to host cell surface receptor and mediates fusion between viral and cellular membranes. Envelope protein is synthesized in the endoplasmic reticulum in the form of heterodimer with protein prM. They play a role in virion budding in the ER, and the newly formed immature particle is covered with 60 spikes composed of heterodimer between precursor prM and envelope protein E. The virion is transported to the Golgi apparatus where the low pH causes dissociation of PrM-E heterodimers and formation of E homodimers. prM-E cleavage is ineficient, and many virions are only partially matured. These uncleaved prM would play a role in immune evasion. The chain is Genome polyprotein from Louping ill virus (strain SB 526) (Li).